Consider the following 212-residue polypeptide: Protein HP-25 homolog 1 (212 aa).

Positions 1–34 are cleaved as a signal peptide; sequence MPGGRRRVGSMNIAGFWILAQFVLLLVANVKSSA. The disordered stretch occupies residues 36–66; that stretch reads SELCGPRGARGPPGLSGLPGPPGYTGPIGMP. The segment covering 40-53 has biased composition (low complexity); that stretch reads GPRGARGPPGLSGL. A Collagen-like domain is found at 40–76; it reads GPRGARGPPGLSGLPGPPGYTGPIGMPGLTGRPGLPG. In terms of domain architecture, C1q spans 82–212; sequence PPLPQSAFSV…VFYGFLLNGN (131 aa). A glycan (N-linked (GlcNAc...) asparagine) is linked at asparagine 125.

The protein resides in the secreted. This chain is Protein HP-25 homolog 1, found in Bos taurus (Bovine).